A 355-amino-acid chain; its full sequence is MSFSDNLAKIVDKYENLGKKLSSGIMGDEFVKASKEYAELEEVVEKIKEYNKAKSELEEANNFKLEVGLDNATLEMIEDEIHTLENSLPKLERAVKIALLPKDEADSKSAIIEVRAGSGGEEAALFAAILFNMYQRYAELKGWHFEILAIVDTGIGGYKEASASIKGKDVFSKLKCESGVHRVQRIPETESHGRIHTSAATVAVLPEVEDVDIKLEDKDLRIDTYRSSGAGGQHVNTTNSAVRITHIPTGITVALQDEKSQHKNKAKALKILRARIYEEERRKKEQKRANNRRGQVGSGDRSERIRTYNFPQGRVSDHRINLTLYKIDEVVKNGQLDEFVDALIADDEAKKLAEI.

Gln-233 carries the N5-methylglutamine modification. Residues 280-310 (ERRKKEQKRANNRRGQVGSGDRSERIRTYNF) are disordered.

The protein belongs to the prokaryotic/mitochondrial release factor family. Methylated by PrmC. Methylation increases the termination efficiency of RF1.

It is found in the cytoplasm. Its function is as follows. Peptide chain release factor 1 directs the termination of translation in response to the peptide chain termination codons UAG and UAA. The sequence is that of Peptide chain release factor 1 from Rickettsia canadensis (strain McKiel).